A 556-amino-acid polypeptide reads, in one-letter code: Phosphoacetylglucosamine mutase (556 aa).

Serine 68 acts as the Phosphoserine intermediate in catalysis. Residues serine 68, aspartate 286, aspartate 288, and aspartate 290 each coordinate Mg(2+). The residue at position 68 (serine 68) is a Phosphoserine. Substrate-binding positions include 386–388 (EAN), 518–522 (RPSGT), and arginine 527.

Belongs to the phosphohexose mutase family. It depends on Mg(2+) as a cofactor.

The enzyme catalyses N-acetyl-alpha-D-glucosamine 1-phosphate = N-acetyl-D-glucosamine 6-phosphate. Its pathway is nucleotide-sugar biosynthesis; UDP-N-acetyl-alpha-D-glucosamine biosynthesis; N-acetyl-alpha-D-glucosamine 1-phosphate from alpha-D-glucosamine 6-phosphate (route I): step 2/2. Its function is as follows. Interconverts GlcNAc-6-P and GlcNAc-1-P. This is Phosphoacetylglucosamine mutase (DRT101) from Arabidopsis thaliana (Mouse-ear cress).